Reading from the N-terminus, the 82-residue chain is Acyl carrier protein (82 aa).

Residues 3–78 (QEIFERVKKV…KAVEHISEKV (76 aa)) enclose the Carrier domain. S38 carries the O-(pantetheine 4'-phosphoryl)serine modification.

This sequence belongs to the acyl carrier protein (ACP) family. In terms of processing, 4'-phosphopantetheine is transferred from CoA to a specific serine of apo-ACP by AcpS. This modification is essential for activity because fatty acids are bound in thioester linkage to the sulfhydryl of the prosthetic group.

Its subcellular location is the cytoplasm. It participates in lipid metabolism; fatty acid biosynthesis. Functionally, carrier of the growing fatty acid chain in fatty acid biosynthesis. This Gloeothece citriformis (strain PCC 7424) (Cyanothece sp. (strain PCC 7424)) protein is Acyl carrier protein.